A 657-amino-acid chain; its full sequence is Single-minded homolog 2 (657 aa).

The bHLH domain maps to 1-53; it reads MKEKSKNAAKTRREKENGEFYELAKLLPLPSAITSQLDKASIIRLTTSYLKMR. PAS domains follow at residues 77–147 and 218–288; these read AKEL…PPLH and PPSA…LVKG. One can recognise a PAC domain in the interval 218–288; that stretch reads PPSAITEIKL…YAHHLLLVKG (71 aa). The region spanning 336-657 is the Single-minded C-terminal domain; it reads EYKELQLSLD…GASVIITNGR (322 aa). Positions 354 to 364 are enriched in polar residues; the sequence is ESWRTTLSTSQ. 2 disordered regions span residues 354–387 and 612–641; these read ESWR…NPYP and LGSA…APGA. The Nuclear localization signal motif lies at 367–386; sequence RKSAKPKNTKMKTKLRTNPY. Residues 369–381 are compositionally biased toward basic residues; sequence SAKPKNTKMKTKL.

In terms of assembly, efficient DNA binding requires dimerization with another bHLH protein. Heterodimer of SIM2 and ARNT. Transcripts were detected in high levels in kidney followed by skeletal muscle and lung. Low levels were found in testis, brain and heart. In early fetal development it is found in CNS, developing kidney, tongue epithelium and cartilage primordia.

It is found in the nucleus. In terms of biological role, transcription factor that may be a master gene of CNS development in cooperation with Arnt. It may have pleiotropic effects in the tissues expressed during development. The polypeptide is Single-minded homolog 2 (Sim2) (Mus musculus (Mouse)).